We begin with the raw amino-acid sequence, 176 residues long: Large ribosomal subunit protein bL19 (176 aa).

The protein belongs to the bacterial ribosomal protein bL19 family.

Its function is as follows. This protein is located at the 30S-50S ribosomal subunit interface and may play a role in the structure and function of the aminoacyl-tRNA binding site. The sequence is that of Large ribosomal subunit protein bL19 from Sinorhizobium fredii (strain NBRC 101917 / NGR234).